We begin with the raw amino-acid sequence, 150 residues long: Transcriptional regulator MraZ (150 aa).

2 consecutive SpoVT-AbrB domains span residues 5–51 (VANL…PQPE) and 80–123 (ATEC…DEDT).

This sequence belongs to the MraZ family. As to quaternary structure, forms oligomers.

Its subcellular location is the cytoplasm. It is found in the nucleoid. This Thioalkalivibrio sulfidiphilus (strain HL-EbGR7) protein is Transcriptional regulator MraZ.